Here is a 450-residue protein sequence, read N- to C-terminus: tRNA-2-methylthio-N(6)-dimethylallyladenosine synthase (450 aa).

The MTTase N-terminal domain occupies 2-119 (KKVFVKTYGC…LPDLIARRQR (118 aa)). [4Fe-4S] cluster is bound by residues C11, C48, C82, C156, C160, and C163. The Radical SAM core domain occupies 142 to 375 (RVEGPSAFVS…QATIEENVQR (234 aa)). Residues 378–448 (QNMVGTVQRI…PHSLRGEIVV (71 aa)) enclose the TRAM domain.

It belongs to the methylthiotransferase family. MiaB subfamily. In terms of assembly, monomer. It depends on [4Fe-4S] cluster as a cofactor.

The protein localises to the cytoplasm. It carries out the reaction N(6)-dimethylallyladenosine(37) in tRNA + (sulfur carrier)-SH + AH2 + 2 S-adenosyl-L-methionine = 2-methylsulfanyl-N(6)-dimethylallyladenosine(37) in tRNA + (sulfur carrier)-H + 5'-deoxyadenosine + L-methionine + A + S-adenosyl-L-homocysteine + 2 H(+). Catalyzes the methylthiolation of N6-(dimethylallyl)adenosine (i(6)A), leading to the formation of 2-methylthio-N6-(dimethylallyl)adenosine (ms(2)i(6)A) at position 37 in tRNAs that read codons beginning with uridine. The protein is tRNA-2-methylthio-N(6)-dimethylallyladenosine synthase of Cupriavidus necator (strain ATCC 17699 / DSM 428 / KCTC 22496 / NCIMB 10442 / H16 / Stanier 337) (Ralstonia eutropha).